The chain runs to 178 residues: Large ribosomal subunit protein uL6 (178 aa).

The protein belongs to the universal ribosomal protein uL6 family. As to quaternary structure, part of the 50S ribosomal subunit.

In terms of biological role, this protein binds to the 23S rRNA, and is important in its secondary structure. It is located near the subunit interface in the base of the L7/L12 stalk, and near the tRNA binding site of the peptidyltransferase center. The sequence is that of Large ribosomal subunit protein uL6 from Corynebacterium urealyticum (strain ATCC 43042 / DSM 7109).